The chain runs to 534 residues: High affinity cGMP-specific 3',5'-cyclic phosphodiesterase 9A (534 aa).

The PDEase domain maps to proline 175–aspartate 496. Histidine 251 acts as the Proton donor in catalysis. Histidine 251–histidine 255 lines the 3',5'-cyclic GMP pocket. 3 residues coordinate Zn(2+): histidine 255, histidine 291, and aspartate 292. Aspartate 292 contacts 3',5'-cyclic GMP. Aspartate 292 contacts Mg(2+). Serine 318 carries the phosphoserine modification. 3',5'-cyclic GMP is bound by residues aspartate 401, tyrosine 423, and alanine 451–glutamine 452. Aspartate 401 serves as a coordination point for Zn(2+). Residues lysine 500–asparagine 534 are disordered. Over residues threonine 517–asparagine 534 the composition is skewed to basic and acidic residues.

This sequence belongs to the cyclic nucleotide phosphodiesterase family. PDE9 subfamily. Homodimer. Requires Zn(2+) as cofactor. Mg(2+) is required as a cofactor. In terms of tissue distribution, highly expressed in kidney. Lower levels in liver, lung and brain. Widely expressed in brain, with highest expression in cerebellar Purkinje cells. Present in heart (at protein level).

It is found in the cell projection. The protein localises to the ruffle membrane. Its subcellular location is the cytoplasm. It localises to the perinuclear region. The protein resides in the golgi apparatus. It is found in the endoplasmic reticulum. The protein localises to the cell membrane. Its subcellular location is the sarcolemma. It carries out the reaction 3',5'-cyclic GMP + H2O = GMP + H(+). Its pathway is purine metabolism; 3',5'-cyclic GMP degradation; GMP from 3',5'-cyclic GMP: step 1/1. Its activity is regulated as follows. Inhibited by SCH 51866 and moderately, by zaprinast. Specifically inhibited by PF-04447943 (6-[(3S,4S)-4-methyl-1-(pyrimidin-2-ylmethyl)pyrrolidin-3-yl]-1-(tetrahydro-2H-pyran-4-yl)-1,5-dihydro-4H-pyrazolo[3,4-d]pyrimidin-4-one). In terms of biological role, specifically hydrolyzes the second messenger cGMP, which is a key regulator of many important physiological processes. Highly specific: compared to other members of the cyclic nucleotide phosphodiesterase family, has the highest affinity and selectivity for cGMP. Specifically regulates natriuretic-peptide-dependent cGMP signaling in heart, acting as a regulator of cardiac hypertrophy in myocytes and muscle. Does not regulate nitric oxide-dependent cGMP in heart. Additional experiments are required to confirm whether its ability to hydrolyze natriuretic-peptide-dependent cGMP is specific to heart or is a general feature of the protein. In brain, involved in cognitive function, such as learning and long-term memory. This chain is High affinity cGMP-specific 3',5'-cyclic phosphodiesterase 9A (Pde9a), found in Mus musculus (Mouse).